The primary structure comprises 842 residues: Elongation factor 2 (842 aa).

The region spanning 17-346 (TNVRNMSVIA…MIVLHLPSPV (330 aa)) is the tr-type G domain. GTP contacts are provided by residues 26-33 (AHVDHGKS), 158-161 (NKVD), and 213-215 (SGL). The residue at position 509 (K509) is an N6,N6,N6-trimethyllysine; by EFM3; alternate. N6,N6-dimethyllysine; by EFM3; alternate is present on K509. K509 is modified (N6-methyllysine; by EFM3; alternate). S579 carries the post-translational modification Phosphoserine. Position 613 is an N6,N6-dimethyllysine; by EFM2; alternate (K613). K613 is modified (N6-methyllysine; by EFM2; alternate). H699 bears the Diphthamide mark. Phosphothreonine is present on residues T713 and T763. Residue K841 forms a Glycyl lysine isopeptide (Lys-Gly) (interchain with G-Cter in ubiquitin) linkage.

The protein belongs to the TRAFAC class translation factor GTPase superfamily. Classic translation factor GTPase family. EF-G/EF-2 subfamily. As to quaternary structure, binds to 80S ribosomes. Actively translating ribosomes show mutually exclusive binding of eIF5a (HYP2 or ANB1) and EFT1/eEF2. Interacts with the 40S ribosomal subunit protein RPL9A; the interaction is direct. Interacts with the 60S ribosomal subunit proteins RPL12A; the interaction is direct. Interacts with RPS23A; the interaction is direct. Interacts with 18S rRNA; the interaction is direct. Interacts with 25S rRNA; the interaction is direct. Interacts with RPL0. Interacts with STM1; promoting ribosome inactivation. In terms of processing, (Microbial infection) Diphthamide can be ADP-ribosylated by diphtheria toxin and by Pseudomonas exotoxin A, thus abolishing its function.

The protein localises to the cytoplasm. The enzyme catalyses GTP + H2O = GDP + phosphate + H(+). It functions in the pathway protein biosynthesis; polypeptide chain elongation. With respect to regulation, inhibited by fusidic acid and sordarin, which prevent the release of eEF2 from the ribosome after the translocation step. While fusidic acid acts on all eukaryotic eEF2, sordarin specifically binds and inhibits only selected fungal eEF2. Functionally, catalyzes the GTP-dependent ribosomal translocation step during translation elongation. During this step, the ribosome changes from the pre-translocational (PRE) to the post-translocational (POST) state as the newly formed A-site-bound peptidyl-tRNA and P-site-bound deacylated tRNA move to the P and E sites, respectively. Catalyzes the coordinated movement of the two tRNA molecules, the mRNA and conformational changes in the ribosome. The protein is Elongation factor 2 (EFT1) of Saccharomyces cerevisiae (strain ATCC 204508 / S288c) (Baker's yeast).